We begin with the raw amino-acid sequence, 159 residues long: MNITLITVGKLKEKYLKDAVNEYAKRLQKYCKLNIIELQDEKTPEKASLKEEKLIKEKEGEKILSSIKDNSYVVSMDLKGKMFSSEEFSAFIDDLGVRGNSSIDFVIGGSLGLSDAVLARANYKLCFSKMTFPHQLFRVMLLEQVYRAFRISRGEPYHK.

Residues Gly108 and 127–132 (FSKMTF) each bind S-adenosyl-L-methionine.

The protein belongs to the RNA methyltransferase RlmH family. In terms of assembly, homodimer.

Its subcellular location is the cytoplasm. The enzyme catalyses pseudouridine(1915) in 23S rRNA + S-adenosyl-L-methionine = N(3)-methylpseudouridine(1915) in 23S rRNA + S-adenosyl-L-homocysteine + H(+). In terms of biological role, specifically methylates the pseudouridine at position 1915 (m3Psi1915) in 23S rRNA. The chain is Ribosomal RNA large subunit methyltransferase H from Clostridium acetobutylicum (strain ATCC 824 / DSM 792 / JCM 1419 / IAM 19013 / LMG 5710 / NBRC 13948 / NRRL B-527 / VKM B-1787 / 2291 / W).